The sequence spans 128 residues: Fluoride-specific ion channel FluC (128 aa).

The next 4 membrane-spanning stretches (helical) occupy residues 4–24, 37–57, 65–85, and 101–121; these read VMGI…RYAI, FGTF…WSFF, TFRL…STFS, and FGYL…GFFI. Positions 76 and 79 each coordinate Na(+).

It belongs to the fluoride channel Fluc/FEX (TC 1.A.43) family.

The protein localises to the cell inner membrane. It catalyses the reaction fluoride(in) = fluoride(out). With respect to regulation, na(+) is not transported, but it plays an essential structural role and its presence is essential for fluoride channel function. Its function is as follows. Fluoride-specific ion channel. Important for reducing fluoride concentration in the cell, thus reducing its toxicity. This is Fluoride-specific ion channel FluC from Desulfotalea psychrophila (strain LSv54 / DSM 12343).